A 95-amino-acid chain; its full sequence is Large ribosomal subunit protein bL27 (95 aa).

The propeptide occupies 1 to 12 (MLLIKKINLQFF). Residues 17 to 37 (GVGSTKNGRDSNPKYLGAKKS) form a disordered region.

It belongs to the bacterial ribosomal protein bL27 family. The N-terminus is cleaved by ribosomal processing cysteine protease Prp.

This chain is Large ribosomal subunit protein bL27, found in Malacoplasma penetrans (strain HF-2) (Mycoplasma penetrans).